The following is a 260-amino-acid chain: MDKKIVIPGDLLSDDVKKSGYGTYVKNDKIYSSLCGIESLKEDKVGVIPLAGAYIPSVNDVVIGVVIVVTPSNWILDIAAPYDGLLHVSEYPRRVESREMPEILDVGDSVILRVRDVDSSMKIELALRDPNLHKLRTGQIVEVEPVKVPRVIGHGGSMISMLKKETNCSIFVGQNGRIWIDGKDEDIELLSKALRKIEAEAQRSGLTDRIYNFLKNERMKEKESKPVEFLKNEKTDVSVAKEDHSEDIYRKIDVLLDPKN.

One can recognise an S1 motif domain in the interval 59–128 (NDVVIGVVIV…SSMKIELALR (70 aa)). A KH domain is found at 136 to 194 (RTGQIVEVEPVKVPRVIGHGGSMISMLKKETNCSIFVGQNGRIWIDGKDEDIELLSKAL).

It belongs to the RRP4 family. In terms of assembly, component of the archaeal exosome complex. Forms a trimer of Rrp4 and/or Csl4 subunits. The trimer associates with a hexameric ring-like arrangement composed of 3 Rrp41-Rrp42 heterodimers.

The protein localises to the cytoplasm. Its function is as follows. Non-catalytic component of the exosome, which is a complex involved in RNA degradation. Increases the RNA binding and the efficiency of RNA degradation. Confers strong poly(A) specificity to the exosome. This chain is Exosome complex component Rrp4, found in Methanosarcina mazei (strain ATCC BAA-159 / DSM 3647 / Goe1 / Go1 / JCM 11833 / OCM 88) (Methanosarcina frisia).